Consider the following 248-residue polypeptide: 4-hydroxy-tetrahydrodipicolinate reductase (248 aa).

NAD(+) is bound by residues 9 to 14, 77 to 79, and 104 to 107; these read GARGKV, GTT, and APNF. His-134 acts as the Proton donor/acceptor in catalysis. His-135 is a binding site for (S)-2,3,4,5-tetrahydrodipicolinate. Lys-138 acts as the Proton donor in catalysis. 144 to 145 is a (S)-2,3,4,5-tetrahydrodipicolinate binding site; sequence GT.

It belongs to the DapB family.

The protein localises to the cytoplasm. The catalysed reaction is (S)-2,3,4,5-tetrahydrodipicolinate + NAD(+) + H2O = (2S,4S)-4-hydroxy-2,3,4,5-tetrahydrodipicolinate + NADH + H(+). It carries out the reaction (S)-2,3,4,5-tetrahydrodipicolinate + NADP(+) + H2O = (2S,4S)-4-hydroxy-2,3,4,5-tetrahydrodipicolinate + NADPH + H(+). The protein operates within amino-acid biosynthesis; L-lysine biosynthesis via DAP pathway; (S)-tetrahydrodipicolinate from L-aspartate: step 4/4. Catalyzes the conversion of 4-hydroxy-tetrahydrodipicolinate (HTPA) to tetrahydrodipicolinate. This chain is 4-hydroxy-tetrahydrodipicolinate reductase, found in Nocardia farcinica (strain IFM 10152).